A 234-amino-acid chain; its full sequence is Carboxy-S-adenosyl-L-methionine synthase (234 aa).

Residues tyrosine 35, 60–62, 83–84, 109–110, asparagine 124, and arginine 191 each bind S-adenosyl-L-methionine; these read GCS, DN, and DI.

The protein belongs to the class I-like SAM-binding methyltransferase superfamily. Cx-SAM synthase family. As to quaternary structure, homodimer.

It carries out the reaction prephenate + S-adenosyl-L-methionine = carboxy-S-adenosyl-L-methionine + 3-phenylpyruvate + H2O. Catalyzes the conversion of S-adenosyl-L-methionine (SAM) to carboxy-S-adenosyl-L-methionine (Cx-SAM). This Campylobacter concisus (strain 13826) protein is Carboxy-S-adenosyl-L-methionine synthase.